Consider the following 233-residue polypeptide: Orotidine 5'-phosphate decarboxylase (233 aa).

Substrate is bound by residues Asp-11, Lys-34, 61–70 (DLKLHDIPNT), Thr-117, Arg-179, Gln-189, Gly-209, and Arg-210. Lys-63 serves as the catalytic Proton donor.

Belongs to the OMP decarboxylase family. Type 1 subfamily. In terms of assembly, homodimer.

It catalyses the reaction orotidine 5'-phosphate + H(+) = UMP + CO2. Its pathway is pyrimidine metabolism; UMP biosynthesis via de novo pathway; UMP from orotate: step 2/2. Catalyzes the decarboxylation of orotidine 5'-monophosphate (OMP) to uridine 5'-monophosphate (UMP). The chain is Orotidine 5'-phosphate decarboxylase from Streptococcus agalactiae serotype Ia (strain ATCC 27591 / A909 / CDC SS700).